The chain runs to 248 residues: tRNA pseudouridine synthase A (248 aa).

Asp54 acts as the Nucleophile in catalysis. Substrate is bound at residue Tyr112.

The protein belongs to the tRNA pseudouridine synthase TruA family. As to quaternary structure, homodimer.

The enzyme catalyses uridine(38/39/40) in tRNA = pseudouridine(38/39/40) in tRNA. Its function is as follows. Formation of pseudouridine at positions 38, 39 and 40 in the anticodon stem and loop of transfer RNAs. This is tRNA pseudouridine synthase A from Geobacillus sp. (strain WCH70).